Reading from the N-terminus, the 131-residue chain is Small ribosomal subunit protein uS8 (131 aa).

This sequence belongs to the universal ribosomal protein uS8 family. In terms of assembly, part of the 30S ribosomal subunit. Contacts proteins S5 and S12.

Its function is as follows. One of the primary rRNA binding proteins, it binds directly to 16S rRNA central domain where it helps coordinate assembly of the platform of the 30S subunit. The polypeptide is Small ribosomal subunit protein uS8 (Campylobacter lari (strain RM2100 / D67 / ATCC BAA-1060)).